The primary structure comprises 1038 residues: Subtilisin-like protease SBT6.1 (1038 aa).

Residues 1 to 30 form the signal peptide; it reads MKVLGEASSYPYRSCIIVVFLSVSLFWLRP. A propeptide spans 31-181 (removed in mature form); that stretch reads STYHPQQQNL…TTLNWSRHLL (151 aa). Residues Asn44, Asn52, Asn171, and Asn175 are each glycosylated (N-linked (GlcNAc...) asparagine). The region spanning 175 to 473 is the Peptidase S8 domain; sequence NWSRHLLAQK…VDLLESYEIL (299 aa). The Lumenal segment spans residues 182–1000; sequence AQKTQVTSMF…IDMPFLVPTR (819 aa). The Charge relay system role is filled by Asp212. Asn230 carries an N-linked (GlcNAc...) asparagine glycan. His243 functions as the Charge relay system in the catalytic mechanism. Asn300 carries N-linked (GlcNAc...) asparagine glycosylation. Catalysis depends on Ser409, which acts as the Charge relay system. N-linked (GlcNAc...) asparagine glycans are attached at residues Asn513, Asn579, Asn902, and Asn954. Residues 1001–1021 traverse the membrane as a helical segment; that stretch reads WIVLAGVVASGVLVLLSIWRI. Residues 1022 to 1038 are Cytoplasmic-facing; sequence RQKRGRRRRASGSNRLA.

It belongs to the peptidase S8 family. As to quaternary structure, interacts with PME1 and PME5. Expressed in the vasculature of roots, cotyledons and leaves.

The protein localises to the golgi apparatus membrane. Functionally, serine protease that catalyzes the first step (site-1 cleavage) in the proteolytic activation of various factors, prior to site-2 cleavage. Part of a regulated intramembrane proteolysis (RIP) cascade. Cleaves BZIP17 and BZIP28 after the Arg-Arg-Ile-Leu (RRIL) motif. May cleave BZIP49 after the RRIL motif. Targets the membrane-associated BZIP17 factor, which functions as a stress sensor and transducer in a signaling pathway that resembles an ER stress response. Following salt stress, BZIP17 is cleaved by SBT6.1 (S1P) and S2P at the C-terminus and the N-terminal bZIP component is translocated to the nucleus, where it activates the expression of salt stress response genes. Cleaves the pectinesterases PME1 after the Arg-Arg-Leu-Met (RRLM) and Arg-Arg-Leu-Leu (RRLL) motifs, and PME5 after the Arg-Arg-Leu-Leu (RRLL) and Arg-Lys-Leu-Met (RKLM) motifs. This processing and C-terminus release occurs in the Golgi apparatus and is required for cell wall targeting of pectinesterases. Thus, SBT6.1 mediates the regulated release of mature pectinesterases from the Golgi. Cleaves the peptide growth factor RALF23 after the Arg-Arg-Ile-Leu (RRIL) motif. This processing is required for RALF23 function in the negative regulation of brassinolide (BL)-mediated signaling pathway (e.g. BL-induced hypocotyl elongation and branching limitation). The polypeptide is Subtilisin-like protease SBT6.1 (Arabidopsis thaliana (Mouse-ear cress)).